A 382-amino-acid polypeptide reads, in one-letter code: Succinate--CoA ligase [ADP-forming] subunit beta (382 aa).

In terms of domain architecture, ATP-grasp spans 9-240; it reads KELFSKYGVK…PRDVSEFEMY (232 aa). ATP-binding positions include lysine 45, 52–54, valine 94, and glutamate 99; that span reads GRG. Residues asparagine 193 and aspartate 207 each contribute to the Mg(2+) site. Substrate is bound by residues asparagine 260 and 317–319; that span reads GIT.

The protein belongs to the succinate/malate CoA ligase beta subunit family. As to quaternary structure, heterotetramer of two alpha and two beta subunits. Mg(2+) serves as cofactor.

The catalysed reaction is succinate + ATP + CoA = succinyl-CoA + ADP + phosphate. The enzyme catalyses GTP + succinate + CoA = succinyl-CoA + GDP + phosphate. The protein operates within carbohydrate metabolism; tricarboxylic acid cycle; succinate from succinyl-CoA (ligase route): step 1/1. Functionally, succinyl-CoA synthetase functions in the citric acid cycle (TCA), coupling the hydrolysis of succinyl-CoA to the synthesis of either ATP or GTP and thus represents the only step of substrate-level phosphorylation in the TCA. The beta subunit provides nucleotide specificity of the enzyme and binds the substrate succinate, while the binding sites for coenzyme A and phosphate are found in the alpha subunit. In Pyrobaculum arsenaticum (strain DSM 13514 / JCM 11321 / PZ6), this protein is Succinate--CoA ligase [ADP-forming] subunit beta.